A 351-amino-acid chain; its full sequence is Ion-translocating oxidoreductase complex subunit D (351 aa).

The next 4 membrane-spanning stretches (helical) occupy residues 20-40 (IMLW…YFFG), 44-64 (LIQV…TLSL), 89-109 (LPPL…IIIA), and 123-143 (PAMI…TSWL). An FMN phosphoryl threonine modification is found at Thr187. A run of 5 helical transmembrane segments spans residues 215–235 (LSGI…LFLL), 244–264 (IPVS…IIAP), 267–287 (FAQP…FFIA), 301–321 (LIFG…GGYP), and 322–342 (DGVA…DYYT).

It belongs to the NqrB/RnfD family. As to quaternary structure, the complex is composed of six subunits: RnfA, RnfB, RnfC, RnfD, RnfE and RnfG. FMN serves as cofactor.

Its subcellular location is the cell inner membrane. Part of a membrane-bound complex that couples electron transfer with translocation of ions across the membrane. This is Ion-translocating oxidoreductase complex subunit D from Pectobacterium atrosepticum (strain SCRI 1043 / ATCC BAA-672) (Erwinia carotovora subsp. atroseptica).